Consider the following 311-residue polypeptide: Dermonecrotic toxin LlSicTox-alphaIII1i (311 aa).

The first 21 residues, 1 to 21, serve as a signal peptide directing secretion; sequence MYAHLALILGCWTVVLQGAET. Residues 22-26 constitute a propeptide that is removed on maturation; that stretch reads DVGER. H38 is an active-site residue. Residues E58 and D60 each contribute to the Mg(2+) site. The active-site Nucleophile is H73. A disulfide bridge links C77 with C83. D117 contributes to the Mg(2+) binding site.

This sequence belongs to the arthropod phospholipase D family. Class I subfamily. It depends on Mg(2+) as a cofactor. As to expression, expressed by the venom gland.

The protein localises to the secreted. The catalysed reaction is an N-(acyl)-sphingosylphosphocholine = an N-(acyl)-sphingosyl-1,3-cyclic phosphate + choline. It carries out the reaction an N-(acyl)-sphingosylphosphoethanolamine = an N-(acyl)-sphingosyl-1,3-cyclic phosphate + ethanolamine. It catalyses the reaction a 1-acyl-sn-glycero-3-phosphocholine = a 1-acyl-sn-glycero-2,3-cyclic phosphate + choline. The enzyme catalyses a 1-acyl-sn-glycero-3-phosphoethanolamine = a 1-acyl-sn-glycero-2,3-cyclic phosphate + ethanolamine. Dermonecrotic toxins cleave the phosphodiester linkage between the phosphate and headgroup of certain phospholipids (sphingolipid and lysolipid substrates), forming an alcohol (often choline) and a cyclic phosphate. This toxin acts on sphingomyelin (SM) with high activity. It also act on acyl- and alkyl-lysophosphatidylcholine (LPC), but not on sphingosylphosphorylcholine (SPC) and phosphatidylcholine (PC). It may also act on ceramide phosphoethanolamine (CPE), and lysophosphatidylethanolamine (LPE), but not on lysophosphatidylserine (LPS), and lysophosphatidylglycerol (LPG). It acts by transphosphatidylation, releasing exclusively cyclic phosphate products as second products. Induces complement-dependent hemolysis and dermonecrosis. Also induces increased vascular permeability, edema, inflammatory response, and platelet aggregation. The protein is Dermonecrotic toxin LlSicTox-alphaIII1i of Loxosceles laeta (South American recluse spider).